The sequence spans 282 residues: Protein NEOXANTHIN-DEFICIENT 1 (282 aa).

Its function is as follows. Required for neoxanthin biosynthesis. Probably not involved directly in the enzymatic conversion of violaxanthin to neoxanthin. Is necessary but not sufficient for neoxanthin synthesis. In Arabidopsis thaliana (Mouse-ear cress), this protein is Protein NEOXANTHIN-DEFICIENT 1.